The primary structure comprises 183 residues: UPF0200 protein MmarC7_0527 (183 aa).

An ATP-binding site is contributed by 8–15; that stretch reads GMPGSGKS.

Belongs to the UPF0200 family.

The sequence is that of UPF0200 protein MmarC7_0527 from Methanococcus maripaludis (strain C7 / ATCC BAA-1331).